A 148-amino-acid chain; its full sequence is Protein H2A.6 (148 aa).

The segment at 120-148 (GAAEKESTKSPKKKAATKSPKKKTAATKE) is disordered. 2 short sequence motifs (SPKK motif) span residues 129 to 132 (SPKK) and 138 to 141 (SPKK). Over residues 129 to 148 (SPKKKAATKSPKKKTAATKE) the composition is skewed to basic residues.

It belongs to the histone H2A family. In terms of assembly, the nucleosome is a histone octamer containing two molecules each of H2A, H2B, H3 and H4 assembled in one H3-H4 heterotetramer and two H2A-H2B heterodimers. The octamer wraps approximately 147 bp of DNA. As to expression, abundant in meristematic tissues.

It localises to the nucleus. The protein resides in the chromosome. Functionally, core component of nucleosome. Nucleosomes wrap and compact DNA into chromatin, limiting DNA accessibility to the cellular machineries which require DNA as a template. Histones thereby play a central role in transcription regulation, DNA repair, DNA replication and chromosomal stability. DNA accessibility is regulated via a complex set of post-translational modifications of histones, also called histone code, and nucleosome remodeling. This chain is Protein H2A.6 (H2A-3), found in Triticum aestivum (Wheat).